We begin with the raw amino-acid sequence, 469 residues long: Calcium-binding mitochondrial carrier protein SCaMC-2 (469 aa).

The Mitochondrial intermembrane portion of the chain corresponds to 1 to 189; it reads MLCLCLYVPL…ERQTGMWWRH (189 aa). EF-hand domains are found at residues 47–80, 78–113, and 114–149; these read TYRQ…QDHE, DHEK…LGVK, and ISEQ…HPVE. Aspartate 60, aspartate 62, aspartate 64, glutamine 66, and glutamate 71 together coordinate Ca(2+). 3 Solcar repeats span residues 184–270, 278–363, and 375–463; these read GMWW…IKRL, LRIH…LKNA, and PGVF…LKIT. A helical transmembrane segment spans residues 190 to 207; it reads LVAGGGAGAVSRTCTAPL. Residues 208-244 are Mitochondrial matrix-facing; it reads DRLKVLMQVHASRSNNMCIVGGFTQMIREGGARSLWR. The chain crosses the membrane as a helical span at residues 245-264; that stretch reads GNGINVLKIAPESAIKFMAY. The Mitochondrial intermembrane portion of the chain corresponds to 265–287; sequence EQIKRLIGSDQETLRIHERLVAG. A helical transmembrane segment spans residues 288–301; the sequence is SLAGAIAQSSIYPM. The Mitochondrial matrix segment spans residues 302–337; it reads EVLKTRMALRKTGQYSGMLDCARKILAREGMAAFYK. Residues 338 to 357 form a helical membrane-spanning segment; that stretch reads GYVPNMLGIIPYAGIDLAVY. Residues 358-380 are Mitochondrial intermembrane-facing; the sequence is ETLKNAWLQRYAVNSADPGVFVL. A helical membrane pass occupies residues 381 to 398; that stretch reads LACGTMSSTCGQLASYPL. The Mitochondrial matrix portion of the chain corresponds to 399–437; it reads ALVRTRMQAQASMEGAPEVTMSSLFKQILRTEGAFGLYR. A helical membrane pass occupies residues 438-457; sequence GLAPNFMKVIPAVSISYVVY. Residues 458–469 are Mitochondrial intermembrane-facing; the sequence is ENLKITLGVQSR.

The protein belongs to the mitochondrial carrier (TC 2.A.29) family.

The protein resides in the mitochondrion inner membrane. In terms of biological role, calcium-dependent mitochondrial solute carrier. Mitochondrial solute carriers shuttle metabolites, nucleotides, and cofactors through the mitochondrial inner membrane. May act as a ATP-Mg/Pi exchanger that mediates the transport of Mg-ATP in exchange for phosphate, catalyzing the net uptake or efflux of adenine nucleotides into or from the mitochondria. In Bos taurus (Bovine), this protein is Calcium-binding mitochondrial carrier protein SCaMC-2 (SLC25A25).